The chain runs to 473 residues: Dol-P-Glc:Glc(2)Man(9)GlcNAc(2)-PP-Dol alpha-1,2-glucosyltransferase (473 aa).

Over 1-6 (MAQLEG) the chain is Cytoplasmic. A helical membrane pass occupies residues 7 to 27 (YCFSAALSCTFLVSCLLFSAF). Residues 28–64 (SRALREPYMDEIFHLPQAQRYCEGHFSLSQWDPMITT) lie on the Extracellular side of the membrane. The chain crosses the membrane as a helical span at residues 65–85 (LPGLYLVSVGVVKPAIWIFAW). Residues 86–97 (SEHVVCSIGMLR) lie on the Cytoplasmic side of the membrane. A helical transmembrane segment spans residues 98–118 (FVNLLFSVGNFYLLYLLFHKV). The Extracellular portion of the chain corresponds to 119–126 (QPRNKAAS). A helical membrane pass occupies residues 127–147 (SIQRVLSTLTLAVFPTLYFFN). At 148–150 (FLY) the chain is on the cytoplasmic side. A helical membrane pass occupies residues 151–171 (YTEAGSMFFTLFAYLMCLYGN). Topologically, residues 172 to 175 (HKTS) are extracellular. A helical transmembrane segment spans residues 176–196 (AFLGFCGFMFRQTNIIWAVFC). The Cytoplasmic segment spans residues 197-256 (AGNVIAQKLTEAWKTELQKKEDRLPPIKGPFAEFRKILQFLLAYSMSFKNLSMLFCLTWP). Residues 257 to 277 (YILLGFLFCAFVVVNGGIVIG) form a helical membrane-spanning segment. Over 278–283 (DRSSHE) the chain is Extracellular. A helical transmembrane segment spans residues 284 to 304 (ACLHFPQLFYFFSFTLFFSFP). Residues 305–317 (HLLSPSKIKTFLS) lie on the Cytoplasmic side of the membrane. Residues 318-338 (LVWKHGILFLVVTLVSVFLVW) form a helical membrane-spanning segment. The Extracellular segment spans residues 339 to 365 (KFTYAHKYLLADNRHYTFYVWKRVFQR). The chain crosses the membrane as a helical span at residues 366–386 (YAILKYLLVPAYIFAGWSIAD). Residues 387 to 392 (SLKSKP) are Cytoplasmic-facing. The chain crosses the membrane as a helical span at residues 393-413 (IFWNLMFFICLFIVIVPQKLL). Residues 414 to 436 (EFRYFILPYVIYRLNITLPPTSR) are Extracellular-facing. The helical transmembrane segment at 437 to 457 (LVCELSCYAIVNFITFYIFLN) threads the bilayer. Topologically, residues 458 to 473 (KTFQWPNSQDIQRFMW) are cytoplasmic.

Belongs to the ALG10 glucosyltransferase family. As to quaternary structure, interacts with KCNH1; may regulate KCNH1, possibly by regulating its N-glycosylation. Interacts with KCNH2; may reduce KCNH2 sensitivity to classic proarrhythmic drug blockade, possibly by regulating its N-glycosylation. Highly expressed in heart, placenta, liver, kidney and pancreas. Weakly expressed in lung, skeletal muscle and brain.

Its subcellular location is the endoplasmic reticulum membrane. It catalyses the reaction an alpha-D-Glc-(1-&gt;3)-alpha-D-Glc-(1-&gt;3)-alpha-D-Man-(1-&gt;2)-alpha-D-Man-(1-&gt;2)-alpha-D-Man-(1-&gt;3)-[alpha-D-Man-(1-&gt;2)-alpha-D-Man-(1-&gt;3)-[alpha-D-Man-(1-&gt;2)-alpha-D-Man-(1-&gt;6)]-alpha-D-Man-(1-&gt;6)]-beta-D-Man-(1-&gt;4)-beta-D-GlcNAc-(1-&gt;4)-alpha-D-GlcNAc-diphospho-di-trans,poly-cis-dolichol + a di-trans,poly-cis-dolichyl beta-D-glucosyl phosphate = a alpha-D-Glc-(1-&gt;2)-alpha-D-Glc-(1-&gt;3)-alpha-D-Glc-(1-&gt;3)-alpha-D-Man-(1-&gt;2)-alpha-D-Man-(1-&gt;2)-alpha-D-Man-(1-&gt;3)-[alpha-D-Man-(1-&gt;2)-alpha-D-Man-(1-&gt;3)-[alpha-D-Man-(1-&gt;2)-alpha-D-Man-(1-&gt;6)]-alpha-D-Man-(1-&gt;6)]-beta-D-Man-(1-&gt;4)-beta-D-GlcNAc-(1-&gt;4)-alpha-D-GlcNAc-diphospho-di-trans,poly-cis-dolichol + a di-trans,poly-cis-dolichyl phosphate + H(+). It participates in protein modification; protein glycosylation. Dol-P-Glc:Glc(2)Man(9)GlcNAc(2)-PP-Dol alpha-1,2-glucosyltransferase that operates in the biosynthetic pathway of dolichol-linked oligosaccharides, the glycan precursors employed in protein asparagine (N)-glycosylation. The assembly of dolichol-linked oligosaccharides begins on the cytosolic side of the endoplasmic reticulum membrane and finishes in its lumen. The sequential addition of sugars to dolichol pyrophosphate produces dolichol-linked oligosaccharides containing fourteen sugars, including two GlcNAcs, nine mannoses and three glucoses. Once assembled, the oligosaccharide is transferred from the lipid to nascent proteins by oligosaccharyltransferases. In the lumen of the endoplasmic reticulum, adds the third and last glucose residue from dolichyl phosphate glucose (Dol-P-Glc) onto the lipid-linked oligosaccharide intermediate Glc(2)Man(9)GlcNAc(2)-PP-Dol to produce Glc(3)Man(9)GlcNAc(2)-PP-Dol. This Homo sapiens (Human) protein is Dol-P-Glc:Glc(2)Man(9)GlcNAc(2)-PP-Dol alpha-1,2-glucosyltransferase.